A 309-amino-acid polypeptide reads, in one-letter code: Probable manganese-dependent inorganic pyrophosphatase (309 aa).

Residues His9, Asp13, Asp15, Asp75, His97, and Asp149 each contribute to the Mn(2+) site.

Belongs to the PPase class C family. Mn(2+) is required as a cofactor.

It is found in the cytoplasm. It catalyses the reaction diphosphate + H2O = 2 phosphate + H(+). This chain is Probable manganese-dependent inorganic pyrophosphatase, found in Staphylococcus saprophyticus subsp. saprophyticus (strain ATCC 15305 / DSM 20229 / NCIMB 8711 / NCTC 7292 / S-41).